Reading from the N-terminus, the 1131-residue chain is MLHVSASKGMTEYFKNILDNVTELYTLADDCRKSGYDVTDHVEIPLAKDMADRVEGIVGPKNVAERIRELVSDLGKEPAALEIAKEIVEGKFGEFGREVGAEQAVRTALAVITEGIVAAPLEGIAHVKIKKNNDSGEYLAIYFAGPIRSAGGTAQALAVLVGDYVRKNMGLDKFKPTEDEVERYGEEVDLYQSEVTTFQYQPKAEEIRAAVRNISVEITGEATDDVEVSGHRDLPRVETNQIRGGALLALVEGVLLKAPKILRHVDKLGIEGWDWLKELKSKKEEVIEEIEEEKDDFNYEEEEDLSQYEDYEVEAVTKFIGEVIAGRPVFSHPSKKGGFRLRYGRSRNTGFATDGFHPAIMYLVDDFMAVGTQLKTERPGKATCVVPVDSIEGPIVRLKDKSVLKIDTVEKAKQYRDDVEEILFLGDILVNYGDFLENNHTILPSSWCTEWYEKILKSENLEYKKEFIENPDQKEAVNYAKLTKTPLHPKYTYFWHDISKDNINVLRNWIIGGKYNESNDSWEVTYDSENPEISNAKRYLELIGCPHTVTGEKLEIFEYYPLLYSLGYDFDEKRDIVEEIEEKLQNTKNNMHFINTIAPFEIRRNAYIYVGARMGRPEKAASRKMKPPVNGLFPIGNAGALVRLINKAVEEGKTDEIEISNVKCSCGNVSLYRTCPFCGNSVEPSGPSRIKLPIKEYWYKALENLKINKAGDVKCIKGMTSKDKIIEPLEKAILRAKNDIYVFKDGTTRFDCTDVPVTHFRPVEIHVGIEKLKSLGYLKDIHGNSLENEDQVLELKVQDVIVPESCMDYFFNVSKFIDDLLEKYYKKDRFYNVNKRDDLVGHLIIGMAPHTSAGMVGRIIGYSNANVGYAHPYFHASKRRNCDGDEDAFFLLLDAFMNFSKRFLPDKRGGQMDAPLVLTTILDPKEVDGEVHNMDSMWEYPIEFYEKSLEGIAPKEIKKIMQTVEDRLDKDSQYEGIGYTHETLKIDEGPLVCAYKTLGSMMEKTSAQLAVAKKIRATDERDVAEKVIQSHFVPDLIGNLRAFSRQGVRCKCGAKYRRMPLKGVCRKCGSRLILTVSKGAVEKYMDVSQTMAEKYEASDYIKQRLEIIRSGIDSLFVNDKRKQVKIEDFFK.

Belongs to the archaeal DNA polymerase II family. Heterodimer of a large subunit and a small subunit.

The catalysed reaction is DNA(n) + a 2'-deoxyribonucleoside 5'-triphosphate = DNA(n+1) + diphosphate. It carries out the reaction Exonucleolytic cleavage in the 3'- to 5'-direction to yield nucleoside 5'-phosphates.. Functionally, possesses two activities: a DNA synthesis (polymerase) and an exonucleolytic activity that degrades single-stranded DNA in the 3'- to 5'-direction. Has a template-primer preference which is characteristic of a replicative DNA polymerase. The polypeptide is DNA polymerase II large subunit (Methanococcus maripaludis (strain C7 / ATCC BAA-1331)).